Consider the following 149-residue polypeptide: Macrodomain Ter protein (149 aa).

Belongs to the MatP family. Homodimer.

It is found in the cytoplasm. In terms of biological role, required for spatial organization of the terminus region of the chromosome (Ter macrodomain) during the cell cycle. Prevents early segregation of duplicated Ter macrodomains during cell division. Binds specifically to matS, which is a 13 bp signature motif repeated within the Ter macrodomain. This chain is Macrodomain Ter protein, found in Vibrio vulnificus (strain YJ016).